The following is a 154-amino-acid chain: Ferredoxin C 1, chloroplastic (154 aa).

The N-terminal 56 residues, 1 to 56, are a transit peptide targeting the chloroplast; the sequence is MATLPLPTQTSTISLPKPYLSNSFSFPLRNATLSTTTNRRNFLTTGRIIARAYKVV. The 2Fe-2S ferredoxin-type domain occupies 57 to 142; it reads VEHDGKTTEL…DCHIKMIPEE (86 aa). [2Fe-2S] cluster contacts are provided by C89, C94, C97, and C126.

This sequence belongs to the 2Fe2S plant-type ferredoxin family. Requires [2Fe-2S] cluster as cofactor.

It localises to the plastid. It is found in the chloroplast. Functionally, ferredoxins are iron-sulfur proteins that transfer electrons in a wide variety of metabolic reactions. Mediates alternative electron partitioning in conditions of acceptor limitation at photosystem I. Accepts electrons from photosystem I (PSI) and is capable of electron transfer with FNR, but cannot support photoreduction of NADP(+). This Arabidopsis thaliana (Mouse-ear cress) protein is Ferredoxin C 1, chloroplastic.